We begin with the raw amino-acid sequence, 414 residues long: L-cysteine:1D-myo-inositol 2-amino-2-deoxy-alpha-D-glucopyranoside ligase (414 aa).

Cys-44 provides a ligand contact to Zn(2+). L-cysteinyl-5'-AMP contacts are provided by residues 44 to 47, Thr-59, and 82 to 84; these read CGIT and NIT. A 'HIGH' region motif is present at residues 46–56; that stretch reads ITPYDSTHLGH. The 'ERGGDP' region signature appears at 188–193; the sequence is ERGGDP. Trp-228 provides a ligand contact to L-cysteinyl-5'-AMP. Zn(2+) is bound at residue Cys-232. Residue 250-252 coordinates L-cysteinyl-5'-AMP; that stretch reads GSD. His-257 contacts Zn(2+). Position 284 (Ile-284) interacts with L-cysteinyl-5'-AMP. The 'KMSKS' region motif lies at 290-294; that stretch reads KMSKS.

Belongs to the class-I aminoacyl-tRNA synthetase family. MshC subfamily. In terms of assembly, monomer. The cofactor is Zn(2+).

It catalyses the reaction 1D-myo-inositol 2-amino-2-deoxy-alpha-D-glucopyranoside + L-cysteine + ATP = 1D-myo-inositol 2-(L-cysteinylamino)-2-deoxy-alpha-D-glucopyranoside + AMP + diphosphate + H(+). In terms of biological role, catalyzes the ATP-dependent condensation of GlcN-Ins and L-cysteine to form L-Cys-GlcN-Ins. This Corynebacterium diphtheriae (strain ATCC 700971 / NCTC 13129 / Biotype gravis) protein is L-cysteine:1D-myo-inositol 2-amino-2-deoxy-alpha-D-glucopyranoside ligase (mshC).